The sequence spans 85 residues: Large ribosomal subunit protein bL27 (85 aa).

The segment at 1 to 22 (MAHKKAGGSTRNGRDSESKRLG) is disordered.

Belongs to the bacterial ribosomal protein bL27 family.

In Vibrio vulnificus (strain CMCP6), this protein is Large ribosomal subunit protein bL27.